We begin with the raw amino-acid sequence, 385 residues long: Endoglucanase 1 (385 aa).

The first 17 residues, 1–17 (MKLVFSALASLLSGASA), serve as a signal peptide directing secretion. N93 and N140 each carry an N-linked (GlcNAc...) asparagine glycan. E176 serves as the catalytic Proton donor. Residues N200 and N237 are each glycosylated (N-linked (GlcNAc...) asparagine). Residue E284 is the Nucleophile of the active site. N289 and N331 each carry an N-linked (GlcNAc...) asparagine glycan.

This sequence belongs to the glycosyl hydrolase 5 (cellulase A) family.

The catalysed reaction is Endohydrolysis of (1-&gt;4)-beta-D-glucosidic linkages in cellulose, lichenin and cereal beta-D-glucans.. Its pathway is glycan metabolism; cellulose degradation. Functionally, active towards carboxymethyl cellulose. The polypeptide is Endoglucanase 1 (eg 1) (Robillarda sp. (strain Y-20)).